We begin with the raw amino-acid sequence, 354 residues long: DNA-binding protein EMBP-1 (354 aa).

3 disordered regions span residues 1–24 (MASS…TPAQ), 106–193 (SAAG…RSAS), and 230–273 (EVNA…RKQQ). Composition is skewed to low complexity over residues 127-140 (SSSG…QGSS) and 232-245 (NAAA…SLSQ). Residues 246–265 (MDERELKRERRKQSNRESAR) are compositionally biased toward basic and acidic residues. The region spanning 250 to 313 (ELKRERRKQS…KTMETENKKL (64 aa)) is the bZIP domain. Positions 252–271 (KRERRKQSNRESARRSRLRK) are basic motif. Residues 278 to 299 (LAQKVSELTAANGTLRSELDQL) form a leucine-zipper region.

Belongs to the bZIP family. As to quaternary structure, heterodimer.

It is found in the nucleus. In terms of biological role, interacts specifically with the 8-bp sequence 5'-CACGTGGC-3'in the abscisic acid response element (ABARE). Also binds to the hexamer motif 5'-ACGTCA-3' of histone gene promoters. This is DNA-binding protein EMBP-1 from Triticum aestivum (Wheat).